Consider the following 198-residue polypeptide: Heme oxygenase PigA (198 aa).

His26 contacts heme b.

This sequence belongs to the heme oxygenase family.

The catalysed reaction is heme b + 3 AH2 + 3 O2 + 2 H(+) = biliverdin IXbeta + CO + Fe(2+) + 3 A + 3 H2O. The enzyme catalyses heme b + 3 AH2 + 3 O2 + 3 H(+) = biliverdin IXdelta + CO + Fe(2+) + 3 A + 3 H2O. Its function is as follows. Involved in heme degradation. Catalyzes the degradation of heme to biliverdin, with the release of iron. Forms biliverdin delta (70%) and beta (30%). Under anaerobic conditions ferredoxin--NADP(+) reductase (fpr) can provide the necessary electrons; Bfd is not required. This Pseudomonas aeruginosa (strain ATCC 15692 / DSM 22644 / CIP 104116 / JCM 14847 / LMG 12228 / 1C / PRS 101 / PAO1) protein is Heme oxygenase PigA.